We begin with the raw amino-acid sequence, 502 residues long: ATP synthase subunit alpha (502 aa).

Position 169–176 (169–176) interacts with ATP; that stretch reads GDRQTGKT.

It belongs to the ATPase alpha/beta chains family. As to quaternary structure, F-type ATPases have 2 components, CF(1) - the catalytic core - and CF(0) - the membrane proton channel. CF(1) has five subunits: alpha(3), beta(3), gamma(1), delta(1), epsilon(1). CF(0) has three main subunits: a(1), b(2) and c(9-12). The alpha and beta chains form an alternating ring which encloses part of the gamma chain. CF(1) is attached to CF(0) by a central stalk formed by the gamma and epsilon chains, while a peripheral stalk is formed by the delta and b chains.

The protein resides in the cell membrane. The catalysed reaction is ATP + H2O + 4 H(+)(in) = ADP + phosphate + 5 H(+)(out). Its function is as follows. Produces ATP from ADP in the presence of a proton gradient across the membrane. The alpha chain is a regulatory subunit. The sequence is that of ATP synthase subunit alpha from Priestia megaterium (strain ATCC 12872 / QMB1551) (Bacillus megaterium).